Consider the following 595-residue polypeptide: Polyadenylate-binding protein-interacting protein 4 (595 aa).

Residues 48 to 113 (RLVYFTTCKI…SRSEFVRKPP (66 aa)) form the Sm domain. Composition is skewed to polar residues over residues 302 to 313 (GGSSTSDGQKPA) and 326 to 346 (GDSQ…TSKQ). 2 disordered regions span residues 302–505 (GGSS…FYYP) and 536–595 (MYHP…KGRE). Positions 364–382 (DEQRRKNNEEVSHNNRSAE) are enriched in basic and acidic residues. Low complexity predominate over residues 416–465 (SQVSSKTKSESSFGQSASRSSESRPGPSTSSRPGLSPSSSIGSMASSEKS). A PAM2-like 1; degenerate motif is present at residues 466–474 (TLNPNAKEF). The PAM2-like 2 signature appears at 475 to 485 (KLNPKAKSFKP). 2 stretches are compositionally biased toward low complexity: residues 488–501 (SAAA…ADAS) and 548–570 (QPQY…PGQQ).

Expressed in cauline leaves, stems, rosette leaves, immature siliques and primary inflorescences.

This Arabidopsis thaliana (Mouse-ear cress) protein is Polyadenylate-binding protein-interacting protein 4 (CID4).